Consider the following 468-residue polypeptide: Putrescine aminotransferase (468 aa).

Residues glycine 150–threonine 151 and glutamine 274 each bind pyridoxal 5'-phosphate. At lysine 300 the chain carries N6-(pyridoxal phosphate)lysine. Pyridoxal 5'-phosphate is bound at residue threonine 332.

Belongs to the class-III pyridoxal-phosphate-dependent aminotransferase family. Putrescine aminotransferase subfamily. Requires pyridoxal 5'-phosphate as cofactor.

The enzyme catalyses an alkane-alpha,omega-diamine + 2-oxoglutarate = an omega-aminoaldehyde + L-glutamate. The catalysed reaction is putrescine + 2-oxoglutarate = 1-pyrroline + L-glutamate + H2O. It catalyses the reaction cadaverine + 2-oxoglutarate = 5-aminopentanal + L-glutamate. It functions in the pathway amine and polyamine degradation; putrescine degradation; 4-aminobutanal from putrescine (transaminase route): step 1/1. Functionally, catalyzes the aminotransferase reaction from putrescine to 2-oxoglutarate, leading to glutamate and 4-aminobutanal, which spontaneously cyclizes to form 1-pyrroline. This is the first step in one of two pathways for putrescine degradation, where putrescine is converted into 4-aminobutanoate (gamma-aminobutyrate or GABA) via 4-aminobutanal. Also functions as a cadaverine transaminase in a a L-lysine degradation pathway to succinate that proceeds via cadaverine, glutarate and L-2-hydroxyglutarate. In Pectobacterium atrosepticum (strain SCRI 1043 / ATCC BAA-672) (Erwinia carotovora subsp. atroseptica), this protein is Putrescine aminotransferase.